The following is a 303-amino-acid chain: Recombination-associated protein RdgC (303 aa).

Belongs to the RdgC family.

It is found in the cytoplasm. The protein resides in the nucleoid. Its function is as follows. May be involved in recombination. The polypeptide is Recombination-associated protein RdgC (Shewanella sediminis (strain HAW-EB3)).